We begin with the raw amino-acid sequence, 518 residues long: MSVNRSSIKSLLMVFMIVSSSLLAPVGGAAADEFRTPAASDTSPEAGECSNLDDFIMFLSVGRINADSCSRQAYVDAAVQDMKDSDANQTKVDIYSAAAGVKGGSETWAAPYDNYLNDTESIAWMKAESAIAQSYSEGESKTEAKVAAKAAIADYYATKQKNLIEQWNFANAQMFTLREQARMEDGISRNYVEPAYRNVEKTNSPDYSLAYSNTTVEKSLVDGTTVNTTGVSMDVTVQHTTVSDVATVSSGPVRAGKYNNQYNEWKATYYSWSVEPASPSQDTLYAVHFQPYADRWQRIVDMNGALQSEADNFVNATWDDYDTGQINASDVLSANTAMSEYGVRSGSESEGLWRSTAALSMMGYDTPNLNNSGMMTVEYKNVQHTGLLMAKNAPNGSWQVNTTYNTSNIDGPVFMATTEGTKLDFADGEEFTIVGMTAKDGTAVNSTQTTKYRYKTANTTELLEVQNQLIELRQEIEDREPEAGGFFGSGSTDTMLVGLLALAGVLLLAQSNNRGGRR.

Positions 1–31 are cleaved as a signal peptide; it reads MSVNRSSIKSLLMVFMIVSSSLLAPVGGAAA. Residues 32 to 485 lie on the Extracellular side of the membrane; sequence DEFRTPAASD…IEDREPEAGG (454 aa). A glycan (N-linked (GlcNAc...) (hybrid) asparagine; by host) is linked at Asn-213. A helical transmembrane segment spans residues 486-506; sequence FFGSGSTDTMLVGLLALAGVL. Topologically, residues 507 to 518 are cytoplasmic; sequence LLAQSNNRGGRR.

Post-translationally, N-glycosylated by a pentasaccharide comprising glucose, glucuronic acid and a terminal 5-N-formyl-legionaminic acid residue.

The protein resides in the virion membrane. In terms of biological role, envelope protein that may play a role in host-cell attachment and viral genome entry. This Halorubrum sp. PV6 (HRPV-1) protein is Envelope protein.